Here is a 219-residue protein sequence, read N- to C-terminus: Large ribosomal subunit protein bL31m (219 aa).

Basic and acidic residues-rich tracts occupy residues 169-181 (KKEEEEAAKKAAE) and 210-219 (KETRHYGKKK). Disordered regions lie at residues 169–188 (KKEEEEAAKKAAEAEEADPF) and 200–219 (TENMNPGLNFKETRHYGKKK).

Belongs to the bacterial ribosomal protein bL31 family. Highly divergent. Component of the mitochondrial large ribosomal subunit (mt-LSU). Mature N.crassa 74S mitochondrial ribosomes consist of a small (37S) and a large (54S) subunit. The 37S small subunit contains a 16S ribosomal RNA (16S mt-rRNA) and 32 different proteins. The 54S large subunit contains a 23S rRNA (23S mt-rRNA) and 42 different proteins. bL31m bridges the mt-LSU central protuberance and the mt-SSU head.

The protein localises to the mitochondrion. Its function is as follows. Component of the mitochondrial ribosome (mitoribosome), a dedicated translation machinery responsible for the synthesis of mitochondrial genome-encoded proteins, including at least some of the essential transmembrane subunits of the mitochondrial respiratory chain. The mitoribosomes are attached to the mitochondrial inner membrane and translation products are cotranslationally integrated into the membrane. The polypeptide is Large ribosomal subunit protein bL31m (mrpl36) (Neurospora crassa (strain ATCC 24698 / 74-OR23-1A / CBS 708.71 / DSM 1257 / FGSC 987)).